The sequence spans 834 residues: Translation factor GUF1 homolog, mitochondrial (834 aa).

Residues 1 to 66 constitute a mitochondrion transit peptide; the sequence is MKLCGVRSSG…RPLLAEPRRY (66 aa). Residues 129-314 enclose the tr-type G domain; sequence ACIRNVSVVA…HIIDKVPPPC (186 aa). Residues 138–145, 205–209, and 259–262 each bind GTP; these read AHVDHGKT, DTPGH, and TKMD. Disordered regions lie at residues 363 to 385 and 476 to 507; these read GAAS…ASGG and TGSP…SSSV. The span at 488–507 shows a compositional bias: low complexity; sequence ATAAETASSDDASGSGSSSV.

It belongs to the TRAFAC class translation factor GTPase superfamily. Classic translation factor GTPase family. LepA subfamily.

The protein resides in the mitochondrion inner membrane. The enzyme catalyses GTP + H2O = GDP + phosphate + H(+). Promotes mitochondrial protein synthesis. May act as a fidelity factor of the translation reaction, by catalyzing a one-codon backward translocation of tRNAs on improperly translocated ribosomes. Binds to mitochondrial ribosomes in a GTP-dependent manner. The sequence is that of Translation factor GUF1 homolog, mitochondrial from Leishmania infantum.